The sequence spans 183 residues: Acireductone dioxygenase (183 aa).

Positions 95, 97, 101, and 139 each coordinate Fe(2+). Ni(2+) contacts are provided by His95, His97, Glu101, and His139.

Belongs to the acireductone dioxygenase (ARD) family. Monomer. Fe(2+) serves as cofactor. The cofactor is Ni(2+).

The enzyme catalyses 1,2-dihydroxy-5-(methylsulfanyl)pent-1-en-3-one + O2 = 3-(methylsulfanyl)propanoate + CO + formate + 2 H(+). It carries out the reaction 1,2-dihydroxy-5-(methylsulfanyl)pent-1-en-3-one + O2 = 4-methylsulfanyl-2-oxobutanoate + formate + 2 H(+). It participates in amino-acid biosynthesis; L-methionine biosynthesis via salvage pathway; L-methionine from S-methyl-5-thio-alpha-D-ribose 1-phosphate: step 5/6. Functionally, catalyzes 2 different reactions between oxygen and the acireductone 1,2-dihydroxy-3-keto-5-methylthiopentene (DHK-MTPene) depending upon the metal bound in the active site. Fe-containing acireductone dioxygenase (Fe-ARD) produces formate and 2-keto-4-methylthiobutyrate (KMTB), the alpha-ketoacid precursor of methionine in the methionine recycle pathway. Ni-containing acireductone dioxygenase (Ni-ARD) produces methylthiopropionate, carbon monoxide and formate, and does not lie on the methionine recycle pathway. This chain is Acireductone dioxygenase, found in Hydrogenobaculum sp. (strain Y04AAS1).